A 255-amino-acid polypeptide reads, in one-letter code: F-box/SPRY domain-containing protein 1 (255 aa).

Residues 3–51 (DPVAALCNYNVLEVIFSYLELDDLSHCSQVCKSWYHFLNDENSDVWRWH) form the F-box domain. A B30.2/SPRY domain is found at 61-253 (LKSDLLSSVP…VSMVYLGTPL (193 aa)).

Belongs to the FBXO45/Fsn family. As to quaternary structure, component of an E3 ubiquitin ligase complex composed of hiw and Fsn.

It is found in the synapse. It participates in protein modification; protein ubiquitination. Its function is as follows. Required in the presynaptic motoneuron to down-regulate the levels of wnd and restrain synaptic terminal growth at the neuromuscular junction (NMJ). The polypeptide is F-box/SPRY domain-containing protein 1 (Drosophila sechellia (Fruit fly)).